Here is a 118-residue protein sequence, read N- to C-terminus: Large ribosomal subunit protein bL20 (118 aa).

Belongs to the bacterial ribosomal protein bL20 family.

Its function is as follows. Binds directly to 23S ribosomal RNA and is necessary for the in vitro assembly process of the 50S ribosomal subunit. It is not involved in the protein synthesizing functions of that subunit. This Shewanella baltica (strain OS223) protein is Large ribosomal subunit protein bL20.